The following is a 264-amino-acid chain: MAATGDALTPQGYIQHHLTNLSVGEGFWTWHIDSLLFSVGLGVLFLWIFRSVGKKATTGVPGKLQCLIEMIVEFVDASVKETFHGRNPVIAPLALTIFVWVFMMNFMDMIPVDWLPSLALLAGVEYLKVVPTTDVNITFSLAIGVFVLIIYYSIKVKGVSGFVKELTLQPFNHWAMIPVNLLLESVTLIAKPISLALRLFGNLYAGELIFILIALMYSANWAMATLGVGLQLGWLIFHILVITLQAFIFMMLTIVYLSMAHEDH.

The next 7 membrane-spanning stretches (helical) occupy residues 29 to 49 (TWHI…LWIF), 90 to 110 (IAPL…MDMI), 111 to 131 (PVDW…KVVP), 134 to 154 (DVNI…YYSI), 177 to 197 (IPVN…SLAL), 208 to 228 (LIFI…TLGV), and 235 to 255 (LIFH…LTIV).

Belongs to the ATPase A chain family. F-type ATPases have 2 components, CF(1) - the catalytic core - and CF(0) - the membrane proton channel. CF(1) has five subunits: alpha(3), beta(3), gamma(1), delta(1), epsilon(1). CF(0) has three main subunits: a(1), b(2) and c(9-12). The alpha and beta chains form an alternating ring which encloses part of the gamma chain. CF(1) is attached to CF(0) by a central stalk formed by the gamma and epsilon chains, while a peripheral stalk is formed by the delta and b chains.

It is found in the cell inner membrane. In terms of biological role, key component of the proton channel; it plays a direct role in the translocation of protons across the membrane. The chain is ATP synthase subunit a from Shewanella denitrificans (strain OS217 / ATCC BAA-1090 / DSM 15013).